The sequence spans 253 residues: E3 ubiquitin-protein ligase MARCHF3 (253 aa).

Residues 63 to 123 (SPFNDRPMCR…ELCHFRFAVE (61 aa)) form an RING-CH-type zinc finger. Zn(2+)-binding residues include C71, C74, C87, C89, H97, C100, C113, and C116. 2 consecutive transmembrane segments (helical) span residues 145–165 (LFGD…SGWL) and 182–202 (AVGL…WTLV). S237 and S243 each carry phosphoserine.

Interacts with MARCHF2 and STX6.

It localises to the cytoplasmic vesicle membrane. Its subcellular location is the early endosome membrane. The catalysed reaction is S-ubiquitinyl-[E2 ubiquitin-conjugating enzyme]-L-cysteine + [acceptor protein]-L-lysine = [E2 ubiquitin-conjugating enzyme]-L-cysteine + N(6)-ubiquitinyl-[acceptor protein]-L-lysine.. It participates in protein modification; protein ubiquitination. In terms of biological role, E3 ubiquitin-protein ligase which may be involved in endosomal trafficking. E3 ubiquitin ligases accept ubiquitin from an E2 ubiquitin-conjugating enzyme in the form of a thioester and then directly transfer the ubiquitin to targeted substrates. The protein is E3 ubiquitin-protein ligase MARCHF3 of Homo sapiens (Human).